We begin with the raw amino-acid sequence, 229 residues long: MKQVRLLPSATVRAACAVAVAALAGCAQIPRDPIIQQPMTAQPPMPIAMQAPGSIFNPGFAGRPLFEDQRPRNVGDILTIVIAENINATKSSGANTNRQGNTDFNVPTAAFLGGLFAKANLSATGANKFAATGGASAANTFNGTITVTVTNVLPNGNLVVSGEKQMLINQGNEFVRFSGVVNPNTISGANSVYSTQVADARIEYSAKGYINEAETMGWLQRFFLNLAPW.

A signal peptide spans 1 to 25 (MKQVRLLPSATVRAACAVAVAALAG). Residue Cys26 is the site of N-palmitoyl cysteine attachment. Cys26 is lipidated: S-diacylglycerol cysteine.

This sequence belongs to the FlgH family. As to quaternary structure, the basal body constitutes a major portion of the flagellar organelle and consists of four rings (L,P,S, and M) mounted on a central rod.

Its subcellular location is the cell outer membrane. The protein localises to the bacterial flagellum basal body. Assembles around the rod to form the L-ring and probably protects the motor/basal body from shearing forces during rotation. The polypeptide is Flagellar L-ring protein (Burkholderia vietnamiensis (strain G4 / LMG 22486) (Burkholderia cepacia (strain R1808))).